A 306-amino-acid polypeptide reads, in one-letter code: Aspartate carbamoyltransferase catalytic subunit (306 aa).

The carbamoyl phosphate site is built by Arg-51 and Thr-52. Lys-79 is an L-aspartate binding site. Carbamoyl phosphate-binding residues include Arg-101, His-130, and Gln-133. 2 residues coordinate L-aspartate: Arg-163 and Arg-215. Carbamoyl phosphate-binding residues include Gly-256 and Pro-257.

The protein belongs to the aspartate/ornithine carbamoyltransferase superfamily. ATCase family. Heterododecamer (2C3:3R2) of six catalytic PyrB chains organized as two trimers (C3), and six regulatory PyrI chains organized as three dimers (R2).

The catalysed reaction is carbamoyl phosphate + L-aspartate = N-carbamoyl-L-aspartate + phosphate + H(+). The protein operates within pyrimidine metabolism; UMP biosynthesis via de novo pathway; (S)-dihydroorotate from bicarbonate: step 2/3. In terms of biological role, catalyzes the condensation of carbamoyl phosphate and aspartate to form carbamoyl aspartate and inorganic phosphate, the committed step in the de novo pyrimidine nucleotide biosynthesis pathway. In Ehrlichia ruminantium (strain Welgevonden), this protein is Aspartate carbamoyltransferase catalytic subunit.